Here is a 283-residue protein sequence, read N- to C-terminus: Ribosomal RNA small subunit methyltransferase A (283 aa).

Asn-13, Leu-15, Gly-39, Glu-59, Asp-87, and Asn-108 together coordinate S-adenosyl-L-methionine.

The protein belongs to the class I-like SAM-binding methyltransferase superfamily. rRNA adenine N(6)-methyltransferase family. RsmA subfamily.

It localises to the cytoplasm. It carries out the reaction adenosine(1518)/adenosine(1519) in 16S rRNA + 4 S-adenosyl-L-methionine = N(6)-dimethyladenosine(1518)/N(6)-dimethyladenosine(1519) in 16S rRNA + 4 S-adenosyl-L-homocysteine + 4 H(+). Functionally, specifically dimethylates two adjacent adenosines (A1518 and A1519) in the loop of a conserved hairpin near the 3'-end of 16S rRNA in the 30S particle. May play a critical role in biogenesis of 30S subunits. This Helicobacter hepaticus (strain ATCC 51449 / 3B1) protein is Ribosomal RNA small subunit methyltransferase A.